We begin with the raw amino-acid sequence, 87 residues long: Translation initiation factor IF-1 1 (87 aa).

The 72-residue stretch at 1–72 (MAKEELLELD…TKGRINFRHK (72 aa)) folds into the S1-like domain. The interval 68-87 (NFRHKDANSPRPPRTGQPRR) is disordered. Pro residues predominate over residues 77 to 87 (PRPPRTGQPRR).

The protein belongs to the IF-1 family. In terms of assembly, component of the 30S ribosomal translation pre-initiation complex which assembles on the 30S ribosome in the order IF-2 and IF-3, IF-1 and N-formylmethionyl-tRNA(fMet); mRNA recruitment can occur at any time during PIC assembly.

Its subcellular location is the cytoplasm. In terms of biological role, one of the essential components for the initiation of protein synthesis. Stabilizes the binding of IF-2 and IF-3 on the 30S subunit to which N-formylmethionyl-tRNA(fMet) subsequently binds. Helps modulate mRNA selection, yielding the 30S pre-initiation complex (PIC). Upon addition of the 50S ribosomal subunit IF-1, IF-2 and IF-3 are released leaving the mature 70S translation initiation complex. The protein is Translation initiation factor IF-1 1 of Burkholderia lata (strain ATCC 17760 / DSM 23089 / LMG 22485 / NCIMB 9086 / R18194 / 383).